We begin with the raw amino-acid sequence, 240 residues long: Ribose-5-phosphate isomerase A (240 aa).

The segment at 1–23 (MKTSGGSDAAKRRAGESAAETVT) is disordered. Residues 32 to 35 (TGST), 92 to 95 (DGAD), and 111 to 114 (KGGG) contribute to the substrate site. E120 (proton acceptor) is an active-site residue. Substrate is bound at residue K138.

This sequence belongs to the ribose 5-phosphate isomerase family. Homodimer.

The enzyme catalyses aldehydo-D-ribose 5-phosphate = D-ribulose 5-phosphate. Its pathway is carbohydrate degradation; pentose phosphate pathway; D-ribose 5-phosphate from D-ribulose 5-phosphate (non-oxidative stage): step 1/1. In terms of biological role, catalyzes the reversible conversion of ribose-5-phosphate to ribulose 5-phosphate. This Halorubrum lacusprofundi (strain ATCC 49239 / DSM 5036 / JCM 8891 / ACAM 34) protein is Ribose-5-phosphate isomerase A.